A 281-amino-acid chain; its full sequence is 2,3,4,5-tetrahydropyridine-2,6-dicarboxylate N-succinyltransferase (281 aa).

Substrate-binding residues include Arg-108 and Asp-145.

This sequence belongs to the transferase hexapeptide repeat family. As to quaternary structure, homotrimer.

Its subcellular location is the cytoplasm. The enzyme catalyses (S)-2,3,4,5-tetrahydrodipicolinate + succinyl-CoA + H2O = (S)-2-succinylamino-6-oxoheptanedioate + CoA. It participates in amino-acid biosynthesis; L-lysine biosynthesis via DAP pathway; LL-2,6-diaminopimelate from (S)-tetrahydrodipicolinate (succinylase route): step 1/3. In Rhodopseudomonas palustris (strain BisB5), this protein is 2,3,4,5-tetrahydropyridine-2,6-dicarboxylate N-succinyltransferase.